The sequence spans 501 residues: ATP synthase subunit alpha (501 aa).

169–176 (GDRQTGKT) contributes to the ATP binding site.

The protein belongs to the ATPase alpha/beta chains family. As to quaternary structure, F-type ATPases have 2 components, CF(1) - the catalytic core - and CF(0) - the membrane proton channel. CF(1) has five subunits: alpha(3), beta(3), gamma(1), delta(1), epsilon(1). CF(0) has three main subunits: a(1), b(2) and c(9-12). The alpha and beta chains form an alternating ring which encloses part of the gamma chain. CF(1) is attached to CF(0) by a central stalk formed by the gamma and epsilon chains, while a peripheral stalk is formed by the delta and b chains.

It is found in the cell membrane. It catalyses the reaction ATP + H2O + 4 H(+)(in) = ADP + phosphate + 5 H(+)(out). Functionally, produces ATP from ADP in the presence of a proton gradient across the membrane. The alpha chain is a regulatory subunit. This Streptococcus pneumoniae serotype 19F (strain G54) protein is ATP synthase subunit alpha.